The sequence spans 303 residues: mRNA-capping enzyme subunit beta (303 aa).

This sequence belongs to the fungal TPase family. In terms of assembly, heterodimer. The mRNA-capping enzyme is composed of two separate chains alpha and beta, respectively a mRNA guanylyltransferase and an mRNA 5'-triphosphate monophosphatase. Mg(2+) is required as a cofactor.

The protein resides in the nucleus. The enzyme catalyses a 5'-end triphospho-ribonucleoside in mRNA + H2O = a 5'-end diphospho-ribonucleoside in mRNA + phosphate + H(+). First step of mRNA capping. Converts the 5'-triphosphate end of a nascent mRNA chain into a diphosphate end. In Schizosaccharomyces pombe (strain 972 / ATCC 24843) (Fission yeast), this protein is mRNA-capping enzyme subunit beta (pct1).